A 208-amino-acid polypeptide reads, in one-letter code: Ribosomal RNA small subunit methyltransferase G (208 aa).

Residues Gly78, Phe83, 101–103, 129–130, and Arg142 each bind S-adenosyl-L-methionine; these read ERS and IE.

Belongs to the methyltransferase superfamily. RNA methyltransferase RsmG family.

Its subcellular location is the cytoplasm. Its function is as follows. Specifically methylates the N7 position of a guanine in 16S rRNA. This chain is Ribosomal RNA small subunit methyltransferase G, found in Borreliella burgdorferi (strain ZS7) (Borrelia burgdorferi).